Reading from the N-terminus, the 354-residue chain is Chorismate synthase (354 aa).

NADP(+) is bound by residues R48 and R54. FMN-binding positions include 125 to 127 (RSS), 238 to 239 (NA), G278, 293 to 297 (KPTSS), and R319.

This sequence belongs to the chorismate synthase family. Homotetramer. It depends on FMNH2 as a cofactor.

It carries out the reaction 5-O-(1-carboxyvinyl)-3-phosphoshikimate = chorismate + phosphate. It functions in the pathway metabolic intermediate biosynthesis; chorismate biosynthesis; chorismate from D-erythrose 4-phosphate and phosphoenolpyruvate: step 7/7. Its function is as follows. Catalyzes the anti-1,4-elimination of the C-3 phosphate and the C-6 proR hydrogen from 5-enolpyruvylshikimate-3-phosphate (EPSP) to yield chorismate, which is the branch point compound that serves as the starting substrate for the three terminal pathways of aromatic amino acid biosynthesis. This reaction introduces a second double bond into the aromatic ring system. This Buchnera aphidicola subsp. Acyrthosiphon pisum (strain 5A) protein is Chorismate synthase.